Consider the following 359-residue polypeptide: Probable dual-specificity RNA methyltransferase RlmN (359 aa).

E99 functions as the Proton acceptor in the catalytic mechanism. The Radical SAM core domain occupies 105–342 (TENRRTACVS…VTIRKSYGTT (238 aa)). C112 and C347 are disulfide-bonded. C119, C123, and C126 together coordinate [4Fe-4S] cluster. S-adenosyl-L-methionine is bound by residues 171-172 (GE), S204, 227-229 (SLH), and N304. The active-site S-methylcysteine intermediate is C347.

This sequence belongs to the radical SAM superfamily. RlmN family. The cofactor is [4Fe-4S] cluster.

It is found in the cytoplasm. It carries out the reaction adenosine(2503) in 23S rRNA + 2 reduced [2Fe-2S]-[ferredoxin] + 2 S-adenosyl-L-methionine = 2-methyladenosine(2503) in 23S rRNA + 5'-deoxyadenosine + L-methionine + 2 oxidized [2Fe-2S]-[ferredoxin] + S-adenosyl-L-homocysteine. The catalysed reaction is adenosine(37) in tRNA + 2 reduced [2Fe-2S]-[ferredoxin] + 2 S-adenosyl-L-methionine = 2-methyladenosine(37) in tRNA + 5'-deoxyadenosine + L-methionine + 2 oxidized [2Fe-2S]-[ferredoxin] + S-adenosyl-L-homocysteine. Functionally, specifically methylates position 2 of adenine 2503 in 23S rRNA and position 2 of adenine 37 in tRNAs. This chain is Probable dual-specificity RNA methyltransferase RlmN, found in Pelodictyon phaeoclathratiforme (strain DSM 5477 / BU-1).